A 501-amino-acid chain; its full sequence is MSSPAQPAVPAPLANLKIQHTKIFINNEWHDSVSGKKFPVLNPATEEVICHVEEGDKADVDKAVKAARQAFQIGSPWRTMDASERGRLLNKLADLMERDRLLLATIEAINGGKVFANAYLSDLGGSIKALKYCAGWADKIHGQTIPSDGDIFTFTRREPIGVCGQIIPWNFPLLMFIWKIGPALSCGNTVVVKPAEQTPLTALHMASLIKEAGFPPGVVNIVPGYGPTAGAAISSHMDVDKVAFTGSTQVGKLIKEAAGKSNLKRVTLELGGKSPCIVFADADLDIAVEFAHHGVFYHQGQCCVAASRIFVEESVYDEFVRKSVERAKKYVLGNPLTQGINQGPQIDKEQHDKILDLIESGKKEGAKLECGGGRWGNKGFFVQPTVFSNVTDEMRIAKEEIFGPVQQIMKFKSIDDVIKRANNTTYGLAAGVFTKDLDRAITVSSALQAGVVWVNCYMILSAQCPFGGFKMSGNGRELGEHGLYEYTELKTVAMKISQKNS.

Serine 2 carries the N-acetylserine modification. An N6-acetyllysine mark is found at lysine 91 and lysine 128. NAD(+)-binding positions include 167-170 (IPWN), 193-196 (KPAE), 226-227 (GP), and 246-247 (GS). N6-acetyllysine is present on lysine 252. Glutamate 269 serves as the catalytic Proton acceptor. 269 to 271 (ELG) lines the NAD(+) pocket. Cysteine 303 functions as the Nucleophile in the catalytic mechanism. A mediates interaction with PRMT3 region spans residues 336–501 (LTQGINQGPQ…VAMKISQKNS (166 aa)). Threonine 337 bears the Phosphothreonine mark. 349-353 (EQHDK) is a binding site for NAD(+). Residues lysine 353 and lysine 367 each carry the N6-acetyllysine modification. 400–402 (EIF) is an NAD(+) binding site. Position 410 is an N6-acetyllysine (lysine 410). Phosphoserine is present on serine 413. 3 positions are modified to N6-acetyllysine: lysine 419, lysine 435, and lysine 495.

It belongs to the aldehyde dehydrogenase family. In terms of assembly, homotetramer. Interacts with PRMT3; the interaction is direct, inhibits ALDH1A1 aldehyde dehydrogenase activity and is independent of the methyltransferase activity of PRMT3. The N-terminus is blocked most probably by acetylation. As to expression, strongly expressed in kidney, lung, testis, intestine, stomach, and trachea, but weakly in the liver.

The protein localises to the cytoplasm. The protein resides in the cytosol. It localises to the cell projection. It is found in the axon. The catalysed reaction is an aldehyde + NAD(+) + H2O = a carboxylate + NADH + 2 H(+). It carries out the reaction all-trans-retinal + NAD(+) + H2O = all-trans-retinoate + NADH + 2 H(+). It catalyses the reaction 9-cis-retinal + NAD(+) + H2O = 9-cis-retinoate + NADH + 2 H(+). The enzyme catalyses 11-cis-retinal + NAD(+) + H2O = 11-cis-retinoate + NADH + 2 H(+). The catalysed reaction is 13-cis-retinal + NAD(+) + H2O = 13-cis-retinoate + NADH + 2 H(+). It carries out the reaction 3-deoxyglucosone + NAD(+) + H2O = 2-dehydro-3-deoxy-D-gluconate + NADH + 2 H(+). It catalyses the reaction (E)-4-hydroxynon-2-enal + NAD(+) + H2O = (E)-4-hydroxynon-2-enoate + NADH + 2 H(+). The enzyme catalyses malonaldehyde + NAD(+) + H2O = 3-oxopropanoate + NADH + 2 H(+). The catalysed reaction is hexanal + NAD(+) + H2O = hexanoate + NADH + 2 H(+). It carries out the reaction propanal + NAD(+) + H2O = propanoate + NADH + 2 H(+). It catalyses the reaction acetaldehyde + NAD(+) + H2O = acetate + NADH + 2 H(+). The enzyme catalyses benzaldehyde + NAD(+) + H2O = benzoate + NADH + 2 H(+). The catalysed reaction is 4-aminobutanal + NAD(+) + H2O = 4-aminobutanoate + NADH + 2 H(+). The protein operates within cofactor metabolism; retinol metabolism. With respect to regulation, inhibited by chloral hydrate. Cytosolic dehydrogenase that catalyzes the irreversible oxidation of a wide range of aldehydes to their corresponding carboxylic acid. Functions downstream of retinol dehydrogenases and catalyzes the oxidation of retinaldehyde into retinoic acid, the second step in the oxidation of retinol/vitamin A into retinoic acid. This pathway is crucial to control the levels of retinol and retinoic acid, two important molecules which excess can be teratogenic and cytotoxic. Also oxidizes aldehydes resulting from lipid peroxidation like (E)-4-hydroxynon-2-enal/HNE, malonaldehyde and hexanal that form protein adducts and are highly cytotoxic. By participating for instance to the clearance of (E)-4-hydroxynon-2-enal/HNE in the lens epithelium prevents the formation of HNE-protein adducts and lens opacification. Functions also downstream of fructosamine-3-kinase in the fructosamine degradation pathway by catalyzing the oxidation of 3-deoxyglucosone, the carbohydrate product of fructosamine 3-phosphate decomposition, which is itself a potent glycating agent that may react with lysine and arginine side-chains of proteins. Also has an aminobutyraldehyde dehydrogenase activity and is probably part of an alternative pathway for the biosynthesis of GABA/4-aminobutanoate in midbrain, thereby playing a role in GABAergic synaptic transmission. The protein is Aldehyde dehydrogenase 1A1 of Rattus norvegicus (Rat).